Reading from the N-terminus, the 194-residue chain is Large ribosomal subunit protein eL15 (194 aa).

Residues 160–194 (RGLTSAGKKGRGLMYKGKGAEKVRPSVRANSKKAK) are disordered.

This sequence belongs to the eukaryotic ribosomal protein eL15 family.

The sequence is that of Large ribosomal subunit protein eL15 from Methanococcus maripaludis (strain C6 / ATCC BAA-1332).